The sequence spans 368 residues: Decarboxylase yanB (368 aa).

His7, His9, and His159 together coordinate Zn(2+). Residue Asn169 is glycosylated (N-linked (GlcNAc...) asparagine). Asp283 serves as a coordination point for Zn(2+). Residues 339-359 (WGAFSACLLLPVGLSALYSVL) traverse the membrane as a helical segment.

This sequence belongs to the metallo-dependent hydrolases superfamily. ACMSD family.

The protein localises to the membrane. The enzyme catalyses 6-methylsalicylate + H(+) = 3-methylphenol + CO2. The protein operates within secondary metabolite biosynthesis; terpenoid biosynthesis. Functionally, decarboxylase; part of the gene cluster that mediates the biosynthesis of yanuthone D, a fungal isoprenoid epoxycyclohexenone that acts as an antibiotic against fungi and bacteria. The first step of the pathway is the synthesis of 6-methylsalicylic acid (6-MSA) by the polyketide synthase yanA. 6-MSA is then converted to m-cresol by the decarboxylase yanB. The cytochrome P450 monooxygenase yanC then catalyzes the oxidation of m-cresol to toluquinol. Epoxidation of toluquinol is then performed by the short chain dehydrogenase yanD, with the help of yanE, and a further prenylation by yanG leads to 7-deacetoxyyanuthone A. The next step is the hydroxylation of C-22 of 7-deacetoxyyanuthone A by the cytochrome P450 monooxygenase yanH to yield 22-deacetylyanuthone A. O-Mevalon transferase yanI then attaches mevalon to the hydroxyl group of 22-deacetylyanuthone A to produce yanuthone E. Finally, the FAD-dependent monooxygenase yanF oxidizes the hydroxyl group at C15 of yanuthone E to form yanuthone D. Furthermore, several branching points in the pathway lead to the production of yanuthones F and G from 7-deacetoxyyanuthone A; yanuthones H and I from 22-deacetylyanuthone A; and yanuthone J from yanuthone E. This is Decarboxylase yanB from Aspergillus niger (strain ATCC 1015 / CBS 113.46 / FGSC A1144 / LSHB Ac4 / NCTC 3858a / NRRL 328 / USDA 3528.7).